The primary structure comprises 369 residues: Phosphate-binding protein PstS 3 (369 aa).

The signal sequence occupies residues 1–21 (MKLNQFGAAIGLLATGALLSG). C22 is lipidated: N-palmitoyl cysteine. The S-diacylglycerol cysteine moiety is linked to residue C22. Phosphate contacts are provided by residues 55–57 (STA), S85, D103, and 190–192 (SGT).

Belongs to the PstS family. The complex is composed of two ATP-binding proteins (PstB), two transmembrane proteins (PstC and PstA) and a solute-binding protein (PstS).

It is found in the cell membrane. Its function is as follows. Part of the ABC transporter complex PstSACB involved in phosphate import. This Mycobacterium leprae (strain TN) protein is Phosphate-binding protein PstS 3 (pstS2).